Reading from the N-terminus, the 480-residue chain is Initiation-specific alpha-1,6-mannosyltransferase (480 aa).

Topologically, residues 1–15 are cytoplasmic; it reads MSRKLSHLIATRKSK. A helical; Signal-anchor for type II membrane protein membrane pass occupies residues 16–30; sequence TIVVTVLLIYSLLTF. Residues 31-480 are Lumenal-facing; that stretch reads HLSNKRLLSQ…EDADKNAGHK (450 aa). The DXD motif signature appears at 187–189; sequence DMD. N-linked (GlcNAc...) asparagine glycans are attached at residues Asn-203, Asn-281, Asn-341, and Asn-393.

It belongs to the glycosyltransferase 32 family. Mn(2+) serves as cofactor. In terms of processing, glycosylated.

It is found in the endoplasmic reticulum membrane. The protein resides in the golgi apparatus membrane. The catalysed reaction is Transfers an alpha-D-mannosyl residue from GDP-mannose into lipid-linked oligosaccharide, forming an alpha-(1-&gt;6)-D-mannosyl-D-mannose linkage.. Mannosyltransferase involved in outer chain elongation of asparagine-linked oligosaccharides of the type Man(9)GlcNAc(2). Adds the first alpha-1,6-mannose to the Man(8)GlcNAc(2) and Man(9)GlcNAc(2), but not Man(5)GlcNAc(2), endoplasmic reticulum intermediates. Represents the first enzymatic event required for synthesis of outer chain mannose linkages on yeast secretory proteins. Also has the potential to transfer a second alpha-1,6-mannose to the Man(8)GlcNAc(2) core oligosaccharide. This chain is Initiation-specific alpha-1,6-mannosyltransferase, found in Saccharomyces cerevisiae (strain ATCC 204508 / S288c) (Baker's yeast).